A 271-amino-acid chain; its full sequence is Phosphonates import ATP-binding protein PhnC 2 (271 aa).

The region spanning 2 to 245 is the ABC transporter domain; it reads LTIDKLTKRF…VARDIYGAGA (244 aa). Residue 34–41 participates in ATP binding; sequence GRSGAGKS.

This sequence belongs to the ABC transporter superfamily. Phosphonates importer (TC 3.A.1.9.1) family. As to quaternary structure, the complex is composed of two ATP-binding proteins (PhnC), two transmembrane proteins (PhnE) and a solute-binding protein (PhnD).

Its subcellular location is the cell inner membrane. It carries out the reaction phosphonate(out) + ATP + H2O = phosphonate(in) + ADP + phosphate + H(+). In terms of biological role, part of the ABC transporter complex PhnCDE involved in phosphonates import. Responsible for energy coupling to the transport system. The chain is Phosphonates import ATP-binding protein PhnC 2 from Roseobacter denitrificans (strain ATCC 33942 / OCh 114) (Erythrobacter sp. (strain OCh 114)).